A 162-amino-acid chain; its full sequence is Protein mmf1, mitochondrial (162 aa).

This sequence belongs to the RutC family.

It localises to the mitochondrion. The protein localises to the cytoplasm. Functionally, plays a role in the maintenance of mitochondrial DNA. This is Protein mmf1, mitochondrial (mmf1) from Schizosaccharomyces pombe (strain 972 / ATCC 24843) (Fission yeast).